Reading from the N-terminus, the 461-residue chain is Cysteine--tRNA ligase (461 aa).

Residue cysteine 28 coordinates Zn(2+). The 'HIGH' region motif lies at 30 to 40 (ITVYDLCHIGH). Residues cysteine 209, histidine 234, and glutamate 238 each contribute to the Zn(2+) site. The 'KMSKS' region signature appears at 266 to 270 (KMSKS). Residue lysine 269 coordinates ATP.

Belongs to the class-I aminoacyl-tRNA synthetase family. In terms of assembly, monomer. The cofactor is Zn(2+).

It is found in the cytoplasm. The catalysed reaction is tRNA(Cys) + L-cysteine + ATP = L-cysteinyl-tRNA(Cys) + AMP + diphosphate. This is Cysteine--tRNA ligase from Salmonella agona (strain SL483).